A 276-amino-acid polypeptide reads, in one-letter code: MAAPTAIRKSTEKSGINEQIQENSTLQSNQALDQNNDDEDMLIDTNAIPTTTVEDQDQSEPSNSLTIQQGETTELQLDESGKPKFSAASKSNMKVKLESRKVAVPPHRMTPLKNVWSKIYPPLVEHLKLQVRMNLKTKTVELRTNKYTTDVGALQKGADFVKAFTLGFDVDDAIALLRLDDLYIETFEIKDVKTLTGDHLSRAIGRIAGKDGKTKFAIENATRTRIVLADSKIHILGGFTHIRMAREAVVSLILGSPPGKVYGNLRTVASRMKERY.

Disordered regions lie at residues 1-39 and 51-92; these read MAAP…NDDE and TTVE…SKSN. Composition is skewed to polar residues over residues 13 to 34 and 51 to 75; these read KSGI…ALDQ and TTVE…TTEL. Positions 197–249 constitute a KH domain; the sequence is GDHLSRAIGRIAGKDGKTKFAIENATRTRIVLADSKIHILGGFTHIRMAREAV.

It belongs to the PNO1 family. In terms of assembly, component of the small ribosomal subunit, ribosomal RNA processing complex (SSU RRP complex).

It is found in the cytoplasm. The protein localises to the nucleus. The protein resides in the nucleolus. Its function is as follows. Required for small ribosomal subunit (SSU) synthesis. Has a role in the processing of early nucleolar and late cytoplasmic pre-RNA species. This chain is Pre-rRNA-processing protein PNO1 (PNO1), found in Candida albicans (strain SC5314 / ATCC MYA-2876) (Yeast).